Reading from the N-terminus, the 303-residue chain is Carboxypeptidase B (303 aa).

One can recognise a Peptidase M14 domain in the interval 5-298 (SYHDYDEINA…EGVKVVANFV (294 aa)). Zn(2+)-binding residues include H63 and E66. Residues 63-66 (HARE), R118, and 136-137 (NR) each bind substrate. H189 contacts Zn(2+). Substrate is bound by residues 190–191 (SY) and Y241. E264 (proton donor/acceptor) is an active-site residue.

Belongs to the peptidase M14 family. Requires Zn(2+) as cofactor.

The protein localises to the secreted. The enzyme catalyses Preferential release of a C-terminal lysine or arginine amino acid.. This chain is Carboxypeptidase B, found in Astacus astacus (Noble crayfish).